Here is a 31-residue protein sequence, read N- to C-terminus: Cytochrome b6-f complex subunit 6 (31 aa).

Residues 4-24 (VISYFGFLLVALAFTLVTYLG) form a helical membrane-spanning segment.

The protein belongs to the PetL family. In terms of assembly, the 4 large subunits of the cytochrome b6-f complex are cytochrome b6, subunit IV (17 kDa polypeptide, PetD), cytochrome f and the Rieske protein, while the 4 small subunits are PetG, PetL, PetM and PetN. The complex functions as a dimer.

It localises to the plastid. It is found in the chloroplast thylakoid membrane. Functionally, component of the cytochrome b6-f complex, which mediates electron transfer between photosystem II (PSII) and photosystem I (PSI), cyclic electron flow around PSI, and state transitions. PetL is important for photoautotrophic growth as well as for electron transfer efficiency and stability of the cytochrome b6-f complex. The sequence is that of Cytochrome b6-f complex subunit 6 from Nephroselmis olivacea (Green alga).